We begin with the raw amino-acid sequence, 214 residues long: MTTLADLRINYSRASLDEADAAPDPFAQFDRWFNEALAAKLPEPNTMTLATVGADGRPSARIVLVKGVDERGFVFFTNYESRKGRDLAAHPYAALLFYWIELERQVRIEGRVEKTSAEESDRYFASRPVGSRIGAWASEQSTVIDSRATLEAREKAFSERYGDDPPRPPHWGGYRVVPDTLEFWQGRPSRLHDRLVYTRDAAAPHGWTISRLSP.

Substrate-binding positions include arginine 8–tyrosine 11 and lysine 66. FMN is bound by residues arginine 61–lysine 66, phenylalanine 76–threonine 77, arginine 82, lysine 83, and glutamine 105. Residues tyrosine 123, arginine 127, and serine 131 each contribute to the substrate site. FMN contacts are provided by residues glutamine 140–serine 141 and tryptophan 184. Arginine 190–histidine 192 contacts substrate. Residue arginine 194 participates in FMN binding.

This sequence belongs to the pyridoxamine 5'-phosphate oxidase family. In terms of assembly, homodimer. It depends on FMN as a cofactor.

It catalyses the reaction pyridoxamine 5'-phosphate + O2 + H2O = pyridoxal 5'-phosphate + H2O2 + NH4(+). It carries out the reaction pyridoxine 5'-phosphate + O2 = pyridoxal 5'-phosphate + H2O2. It functions in the pathway cofactor metabolism; pyridoxal 5'-phosphate salvage; pyridoxal 5'-phosphate from pyridoxamine 5'-phosphate: step 1/1. It participates in cofactor metabolism; pyridoxal 5'-phosphate salvage; pyridoxal 5'-phosphate from pyridoxine 5'-phosphate: step 1/1. Functionally, catalyzes the oxidation of either pyridoxine 5'-phosphate (PNP) or pyridoxamine 5'-phosphate (PMP) into pyridoxal 5'-phosphate (PLP). This chain is Pyridoxine/pyridoxamine 5'-phosphate oxidase, found in Burkholderia multivorans (strain ATCC 17616 / 249).